The sequence spans 215 residues: Thymidylate kinase (215 aa).

13–20 (GLEGAGKS) is an ATP binding site.

This sequence belongs to the thymidylate kinase family.

It catalyses the reaction dTMP + ATP = dTDP + ADP. Its function is as follows. Phosphorylation of dTMP to form dTDP in both de novo and salvage pathways of dTTP synthesis. The polypeptide is Thymidylate kinase (Shewanella frigidimarina (strain NCIMB 400)).